We begin with the raw amino-acid sequence, 555 residues long: Serine/threonine-protein kinase AGC1-7 (555 aa).

Residues 1–126 (MLTKPGKKLD…PSKPHTGGDI (126 aa)) form a disordered region. Basic and acidic residues-rich tracts occupy residues 7-16 (KKLDSSESTH) and 35-54 (PRKE…DNLI). The segment covering 84 to 118 (SQSNLNTKPNNNNSNNNSNMSSRSNSIESTSSNPS) has biased composition (low complexity). The 335-residue stretch at 146 to 480 (FRLLKRLGYG…ATEIKQHPFF (335 aa)) folds into the Protein kinase domain. ATP is bound by residues 152–160 (LGYGDIGSV) and K175. The active-site Proton acceptor is the D271. The region spanning 481-555 (EGVNWALIRS…DPDYIDFEYF (75 aa)) is the AGC-kinase C-terminal domain. The disordered stretch occupies residues 514-547 (AAVDGGGKKNNNGAGGGCSTGGGDNKPNGDCNDP). Positions 526-537 (GAGGGCSTGGGD) are enriched in gly residues.

It belongs to the protein kinase superfamily. AGC Ser/Thr protein kinase family. In terms of assembly, interacts with PDPK1/PDK1. Autophosphorylated and phosphorylated by PDPK1/PDK1. In terms of tissue distribution, specifically expressed in pollen grains.

It is found in the cytoplasm. The catalysed reaction is L-seryl-[protein] + ATP = O-phospho-L-seryl-[protein] + ADP + H(+). The enzyme catalyses L-threonyl-[protein] + ATP = O-phospho-L-threonyl-[protein] + ADP + H(+). Its activity is regulated as follows. Activated by PDPK1/PDK1. In terms of biological role, functions redudantly with AGC1-5 as signaling component in the pollen tube. Required for polarized growth of pollen tubes. The protein is Serine/threonine-protein kinase AGC1-7 of Arabidopsis thaliana (Mouse-ear cress).